The sequence spans 400 residues: Large envelope protein (400 aa).

Position 1 is an N-acetylmethionine (Met-1). Disordered regions lie at residues 1–20 (MGGW…SVPN) and 85–114 (LTPV…PLRD). Gly-2 carries N-myristoyl glycine; by host lipidation. Residues 2 to 119 (GGWSSKPRKG…PPLRDSHPQA (118 aa)) form a pre-S1 region. The tract at residues 2–174 (GGWSSKPRKG…SARTGDPVTN (173 aa)) is pre-S. The Virion surface; in external conformation segment spans residues 2-181 (GGWSSKPRKG…VTNMENITSG (180 aa)). Topologically, residues 2–253 (GGWSSKPRKG…PGYRWMCLRR (252 aa)) are intravirion; in internal conformation. A glycan (N-linked (GlcNAc...) asparagine) is linked at Trp-4. Residues 97 to 106 (ANRQSGRQPT) show a composition bias toward polar residues. The segment at 120 to 174 (MQWNSTAFHQALQDPRVRGLYFPAGGSSSGTVNPAPNIASHISSISARTGDPVTN) is pre-S2. A helical membrane pass occupies residues 182–202 (FLGPLPVLQAGFFLLTRILTI). At 203–253 (PQSLDSWWTSLNFLGGSPVCLGQNSRSPTSNHSPTSCPPICPGYRWMCLRR) the chain is on the intravirion; in external conformation side. The chain crosses the membrane as a helical span at residues 254–274 (FIIFLFILLLCLIFLLVLLDY). The Virion surface segment spans residues 275–348 (QGMLPVCPLI…WASVRFSWLS (74 aa)). Asn-320 carries N-linked (GlcNAc...) asparagine; by host glycosylation. The helical transmembrane segment at 349–369 (LLVPFVQWFVGLSPTVWLSAI) threads the bilayer. Over 370 to 375 (WMMWYW) the chain is Intravirion. Residues 376 to 398 (GPSLYSIVSSFIPLLPIFFCLWV) traverse the membrane as a helical segment. Topologically, residues 399 to 400 (YI) are virion surface.

This sequence belongs to the orthohepadnavirus major surface antigen family. As to quaternary structure, in its internal form (Li-HBsAg), interacts with the capsid protein and with the isoform S. Interacts with host chaperone CANX. Associates with host chaperone CANX through its pre-S2 N glycan; this association may be essential for isoform M proper secretion. In terms of assembly, interacts with isoform L. Interacts with the antigens of satellite virus HDV (HDVAgs); this interaction is required for encapsidation of HDV genomic RNA. Isoform M is N-terminally acetylated by host at a ratio of 90%, and N-glycosylated by host at the pre-S2 region. Post-translationally, myristoylated.

The protein localises to the virion membrane. Functionally, the large envelope protein exists in two topological conformations, one which is termed 'external' or Le-HBsAg and the other 'internal' or Li-HBsAg. In its external conformation the protein attaches the virus to cell receptors and thereby initiating infection. This interaction determines the species specificity and liver tropism. This attachment induces virion internalization predominantly through caveolin-mediated endocytosis. The large envelope protein also assures fusion between virion membrane and endosomal membrane. In its internal conformation the protein plays a role in virion morphogenesis and mediates the contact with the nucleocapsid like a matrix protein. Its function is as follows. The middle envelope protein plays an important role in the budding of the virion. It is involved in the induction of budding in a nucleocapsid independent way. In this process the majority of envelope proteins bud to form subviral lipoprotein particles of 22 nm of diameter that do not contain a nucleocapsid. This chain is Large envelope protein, found in Homo sapiens (Human).